We begin with the raw amino-acid sequence, 500 residues long: Protein-tyrosine sulfotransferase (500 aa).

An N-terminal signal peptide occupies residues M1 to A24. The Lumenal portion of the chain corresponds to E25–K467. Active-site residues include R121 and E142. Residues N156, N248, N315, N343, N359, and N395 are each glycosylated (N-linked (GlcNAc...) asparagine). A helical membrane pass occupies residues L468–V488. The Cytoplasmic segment spans residues N489–I500.

In terms of tissue distribution, expressed throughout the plant body, highest levels of expression are in the root apical meristem.

The protein localises to the golgi apparatus membrane. It carries out the reaction L-tyrosyl-[protein] + 3'-phosphoadenylyl sulfate = O-sulfo-L-tyrosine-[protein] + adenosine 3',5'-bisphosphate + H(+). Its function is as follows. Catalyzes the O-sulfation of tyrosine residues within acidic motifs of polypeptides. The polypeptide is Protein-tyrosine sulfotransferase (TPST) (Arabidopsis thaliana (Mouse-ear cress)).